Here is a 398-residue protein sequence, read N- to C-terminus: tRNA-specific 2-thiouridylase MnmA (398 aa).

ATP-binding positions include 20 to 27 (AMSGGVDS) and Leu46. Cys114 acts as the Nucleophile in catalysis. Cys114 and Cys210 are oxidised to a cystine. Gly138 is a binding site for ATP. The interval 160–162 (RDQ) is interaction with tRNA. Cys210 serves as the catalytic Cysteine persulfide intermediate.

Belongs to the MnmA/TRMU family.

It localises to the cytoplasm. It carries out the reaction S-sulfanyl-L-cysteinyl-[protein] + uridine(34) in tRNA + AH2 + ATP = 2-thiouridine(34) in tRNA + L-cysteinyl-[protein] + A + AMP + diphosphate + H(+). Functionally, catalyzes the 2-thiolation of uridine at the wobble position (U34) of tRNA, leading to the formation of s(2)U34. This is tRNA-specific 2-thiouridylase MnmA from Brucella suis (strain ATCC 23445 / NCTC 10510).